The chain runs to 338 residues: 3-dehydroquinate synthase (338 aa).

This sequence belongs to the archaeal-type DHQ synthase family.

The catalysed reaction is 2-amino-2,3,7-trideoxy-D-lyxo-hept-6-ulosonate + NAD(+) + H2O = 3-dehydroquinate + NH4(+) + NADH + H(+). Catalyzes the oxidative deamination and cyclization of 2-amino-3,7-dideoxy-D-threo-hept-6-ulosonic acid (ADH) to yield 3-dehydroquinate (DHQ), which is fed into the canonical shikimic pathway of aromatic amino acid biosynthesis. The sequence is that of 3-dehydroquinate synthase from Cenarchaeum symbiosum (strain A).